The primary structure comprises 230 residues: Probable carboxylesterase Culp2 (230 aa).

Positions 1-32 form a signal peptide, tat-type signal; it reads MNDLLTRRLLTMGAAAAMLAAVLLLTPITVPA. Cys45 and Cys112 are oxidised to a cystine. Ser123 acts as the Nucleophile in catalysis. A disulfide bond links Cys185 and Cys192. Asp189 is an active-site residue. His207 functions as the Proton donor/acceptor in the catalytic mechanism.

The protein belongs to the cutinase family. In terms of processing, predicted to be exported by the Tat system. The position of the signal peptide cleavage has not been experimentally proven.

Its subcellular location is the secreted. It is found in the cell surface. The polypeptide is Probable carboxylesterase Culp2 (cut2) (Mycobacterium bovis (strain ATCC BAA-935 / AF2122/97)).